Reading from the N-terminus, the 179-residue chain is Large ribosomal subunit protein uL6 (179 aa).

The protein belongs to the universal ribosomal protein uL6 family. Part of the 50S ribosomal subunit.

Its function is as follows. This protein binds to the 23S rRNA, and is important in its secondary structure. It is located near the subunit interface in the base of the L7/L12 stalk, and near the tRNA binding site of the peptidyltransferase center. This chain is Large ribosomal subunit protein uL6, found in Prochlorococcus marinus (strain MIT 9515).